The following is a 518-amino-acid chain: Lysine--tRNA ligase (518 aa).

The segment at 1–28 (MTEPTQPNAAQPDAARPNVAPEMDDNKI) is disordered. Mg(2+) contacts are provided by Glu-428 and Glu-435.

The protein belongs to the class-II aminoacyl-tRNA synthetase family. As to quaternary structure, homodimer. Mg(2+) is required as a cofactor.

It localises to the cytoplasm. It carries out the reaction tRNA(Lys) + L-lysine + ATP = L-lysyl-tRNA(Lys) + AMP + diphosphate. This chain is Lysine--tRNA ligase, found in Paraburkholderia phytofirmans (strain DSM 17436 / LMG 22146 / PsJN) (Burkholderia phytofirmans).